The chain runs to 645 residues: DNA mismatch repair protein MutL (645 aa).

Disordered stretches follow at residues 353 to 381 (RPEN…FGPQ) and 395 to 420 (QGEP…PTTG).

This sequence belongs to the DNA mismatch repair MutL/HexB family.

This protein is involved in the repair of mismatches in DNA. It is required for dam-dependent methyl-directed DNA mismatch repair. May act as a 'molecular matchmaker', a protein that promotes the formation of a stable complex between two or more DNA-binding proteins in an ATP-dependent manner without itself being part of a final effector complex. This Pseudomonas syringae pv. tomato (strain ATCC BAA-871 / DC3000) protein is DNA mismatch repair protein MutL.